Consider the following 437-residue polypeptide: Glutamyl-tRNA reductase (437 aa).

Residues 46-49 (TCNR), S111, 116-118 (ERE), and Q122 contribute to the substrate site. Residue C47 is the Nucleophile of the active site. 192–197 (GTGAYA) contacts NADP(+). The interval 413-437 (PDVPEETAPSTRQDPSDTPRPRAVG) is disordered. A compositionally biased stretch (basic and acidic residues) spans 426–437 (DPSDTPRPRAVG).

This sequence belongs to the glutamyl-tRNA reductase family. As to quaternary structure, homodimer.

The enzyme catalyses (S)-4-amino-5-oxopentanoate + tRNA(Glu) + NADP(+) = L-glutamyl-tRNA(Glu) + NADPH + H(+). It functions in the pathway porphyrin-containing compound metabolism; protoporphyrin-IX biosynthesis; 5-aminolevulinate from L-glutamyl-tRNA(Glu): step 1/2. Catalyzes the NADPH-dependent reduction of glutamyl-tRNA(Glu) to glutamate 1-semialdehyde (GSA). The sequence is that of Glutamyl-tRNA reductase from Kocuria rhizophila (strain ATCC 9341 / DSM 348 / NBRC 103217 / DC2201).